Reading from the N-terminus, the 588-residue chain is MNNSINHKFHHISRAEYQELLAVSRGDAVADYIIDNVSILDLINGGEISGPIVIKGRYIAGVGAEYADAPALQRIDARGATAVPGFIDAHLHIESSMMTPVTFETATLPRGLTTVICDPHEIVNVMGEAGFAWFARCAEQARQNQYLQVSSCVPALEGCDVNGASFTLEQMLAWRDHPQVTGLAEMMDYPGIISGQNALLDKLDAFRHLTLDGHCPGLGGKELNAYIAAGIENCHESYQLEEGRRKLQLGMSLMIREGSAARNLNALAPLINEFNSPQCMLCTDDRNPWEIAHEGHIDALIRRLIEQHNVPLHVAYRVASWSTARHFGLNHLGLLAPGKQADIVLLSDARKVTVQQVLVKGEPIDAQTLQAEESARLAQSAPPYGNTIDRQPVSASDFALQFTPGKRYRVIEVIHNELITHSRSSVYSENGFDRDDVCFIAVLERYGQRLAPACGLLGGFGLNEGALAATVSHDSHNIVVIGRSAEEMALAVNQVIQDGGGLCVVRNGQVQSHLPLPIAGLMSTDTAQSLAEQIDALKAAARECGPLPDEPFIQMAFLSLPVIPALKLTSQGLFDGEKFAFTTLEVTE.

Belongs to the metallo-dependent hydrolases superfamily. Adenine deaminase family. In terms of assembly, homodimer. Mn(2+) serves as cofactor.

The catalysed reaction is adenine + H2O + H(+) = hypoxanthine + NH4(+). The chain is Adenine deaminase from Escherichia coli O6:H1 (strain CFT073 / ATCC 700928 / UPEC).